Reading from the N-terminus, the 289-residue chain is uncharacterized protein (289 aa).

This is an uncharacterized protein from Acanthamoeba polyphaga mimivirus (APMV).